Here is a 274-residue protein sequence, read N- to C-terminus: 2,3,4,5-tetrahydropyridine-2,6-dicarboxylate N-succinyltransferase (274 aa).

Substrate is bound by residues arginine 104 and aspartate 141.

It belongs to the transferase hexapeptide repeat family. As to quaternary structure, homotrimer.

It localises to the cytoplasm. It catalyses the reaction (S)-2,3,4,5-tetrahydrodipicolinate + succinyl-CoA + H2O = (S)-2-succinylamino-6-oxoheptanedioate + CoA. It participates in amino-acid biosynthesis; L-lysine biosynthesis via DAP pathway; LL-2,6-diaminopimelate from (S)-tetrahydrodipicolinate (succinylase route): step 1/3. In Escherichia coli O157:H7, this protein is 2,3,4,5-tetrahydropyridine-2,6-dicarboxylate N-succinyltransferase (dapD).